We begin with the raw amino-acid sequence, 305 residues long: Dihydroorotate dehydrogenase B (NAD(+)), catalytic subunit (305 aa).

FMN is bound by residues S23 and 47-48 (KG). Residues K47 and 71–75 (NAIGL) contribute to the substrate site. FMN-binding residues include N101 and N129. N129 is a binding site for substrate. C132 acts as the Nucleophile in catalysis. Positions 167 and 193 each coordinate FMN. Substrate is bound at residue 194–195 (NT). FMN is bound by residues G219, 245 to 246 (GG), and 267 to 268 (GT).

The protein belongs to the dihydroorotate dehydrogenase family. Type 1 subfamily. In terms of assembly, heterotetramer of 2 PyrK and 2 PyrD type B subunits. Requires FMN as cofactor.

The protein resides in the cytoplasm. The enzyme catalyses (S)-dihydroorotate + NAD(+) = orotate + NADH + H(+). The protein operates within pyrimidine metabolism; UMP biosynthesis via de novo pathway; orotate from (S)-dihydroorotate (NAD(+) route): step 1/1. Functionally, catalyzes the conversion of dihydroorotate to orotate with NAD(+) as electron acceptor. The protein is Dihydroorotate dehydrogenase B (NAD(+)), catalytic subunit (pyrD) of Geotalea uraniireducens (strain Rf4) (Geobacter uraniireducens).